A 465-amino-acid chain; its full sequence is Cysteine--tRNA ligase (465 aa).

C29 lines the Zn(2+) pocket. The short motif at 31–41 (PTVYNYIHIGN) is the 'HIGH' region element. The Zn(2+) site is built by C209, H234, and E238. The 'KMSKS' region motif lies at 266–270 (KMSKS). K269 lines the ATP pocket. Phosphoserine is present on S270.

This sequence belongs to the class-I aminoacyl-tRNA synthetase family. As to quaternary structure, monomer. Requires Zn(2+) as cofactor.

It is found in the cytoplasm. The catalysed reaction is tRNA(Cys) + L-cysteine + ATP = L-cysteinyl-tRNA(Cys) + AMP + diphosphate. The sequence is that of Cysteine--tRNA ligase from Bacillus cereus (strain B4264).